We begin with the raw amino-acid sequence, 331 residues long: Probable inactive O-methyltransferase 11 (331 aa).

Residues Gly179, Asp202, 224 to 226, Asp225, Phe226, and Lys239 contribute to the S-adenosyl-L-methionine site; that span reads GDF.

Belongs to the class I-like SAM-binding methyltransferase superfamily. Cation-independent O-methyltransferase family. COMT subfamily.

The protein is Probable inactive O-methyltransferase 11 (omt11) of Dictyostelium discoideum (Social amoeba).